Reading from the N-terminus, the 182-residue chain is Large ribosomal subunit protein uL10 (182 aa).

It belongs to the universal ribosomal protein uL10 family. As to quaternary structure, part of the ribosomal stalk of the 50S ribosomal subunit. The N-terminus interacts with L11 and the large rRNA to form the base of the stalk. The C-terminus forms an elongated spine to which L12 dimers bind in a sequential fashion forming a multimeric L10(L12)X complex.

Functionally, forms part of the ribosomal stalk, playing a central role in the interaction of the ribosome with GTP-bound translation factors. This is Large ribosomal subunit protein uL10 from Parafrankia sp. (strain EAN1pec).